A 356-amino-acid polypeptide reads, in one-letter code: Tail sheath protein (356 aa).

Belongs to the myoviridae tail sheath protein family. Homomultimer.

It is found in the virion. Its subcellular location is the host cytoplasm. Functionally, polymerizes as an extended structure around the baseplate-tail tube complex. During ejection, the sheath shifts to a contracted form, thereby making the inner tail tube protrude through the host cell envelope. The sequence is that of Tail sheath protein from Clostridioides difficile (Peptoclostridium difficile).